A 103-amino-acid chain; its full sequence is Small ribosomal subunit protein uS10 (103 aa).

It belongs to the universal ribosomal protein uS10 family. As to quaternary structure, part of the 30S ribosomal subunit.

Functionally, involved in the binding of tRNA to the ribosomes. The protein is Small ribosomal subunit protein uS10 of Alkalilimnicola ehrlichii (strain ATCC BAA-1101 / DSM 17681 / MLHE-1).